The sequence spans 73 residues: Large ribosomal subunit protein bL31 (73 aa).

This sequence belongs to the bacterial ribosomal protein bL31 family. Type A subfamily. In terms of assembly, part of the 50S ribosomal subunit.

In terms of biological role, binds the 23S rRNA. The protein is Large ribosomal subunit protein bL31 (rpmE) of Roseobacter denitrificans (strain ATCC 33942 / OCh 114) (Erythrobacter sp. (strain OCh 114)).